The chain runs to 286 residues: Thymidylate synthase (286 aa).

Arg27 lines the dUMP pocket. His57 serves as a coordination point for (6R)-5,10-methylene-5,6,7,8-tetrahydrofolate. DUMP is bound at residue 148–149 (RR). Cys168 (nucleophile) is an active-site residue. Residues 188–191 (RSAD), Asn199, and 229–231 (HLY) contribute to the dUMP site. Residue Asp191 coordinates (6R)-5,10-methylene-5,6,7,8-tetrahydrofolate. (6R)-5,10-methylene-5,6,7,8-tetrahydrofolate is bound at residue Ala285.

It belongs to the thymidylate synthase family. Bacterial-type ThyA subfamily. In terms of assembly, homodimer.

The protein localises to the cytoplasm. The catalysed reaction is dUMP + (6R)-5,10-methylene-5,6,7,8-tetrahydrofolate = 7,8-dihydrofolate + dTMP. It participates in pyrimidine metabolism; dTTP biosynthesis. Catalyzes the reductive methylation of 2'-deoxyuridine-5'-monophosphate (dUMP) to 2'-deoxythymidine-5'-monophosphate (dTMP) while utilizing 5,10-methylenetetrahydrofolate (mTHF) as the methyl donor and reductant in the reaction, yielding dihydrofolate (DHF) as a by-product. This enzymatic reaction provides an intracellular de novo source of dTMP, an essential precursor for DNA biosynthesis. The polypeptide is Thymidylate synthase (Psychrobacter sp. (strain PRwf-1)).